A 663-amino-acid polypeptide reads, in one-letter code: Polyunsaturated fatty acid lipoxygenase ALOX15 (663 aa).

The 114-residue stretch at 2–115 folds into the PLAT domain; that stretch reads GLYRVRVSTG…ILSLPEGTGR (114 aa). The Lipoxygenase domain maps to 116-663; that stretch reads TVVDDPQGLF…PSLVENSVAI (548 aa). Positions 361, 366, 541, 545, and 663 each coordinate Fe cation.

It belongs to the lipoxygenase family. In terms of assembly, interacts with PEBP1; in response to IL13/interleukin-13, prevents the interaction of PEBP1 with RAF1 to activate the ERK signaling cascade. Fe cation serves as cofactor. In terms of tissue distribution, detected in tracheal epithelium.

The protein resides in the cytoplasm. The protein localises to the cytosol. Its subcellular location is the cell membrane. It is found in the lipid droplet. The catalysed reaction is (5Z,8Z,11Z,14Z)-eicosatetraenoate + O2 = (12S)-hydroperoxy-(5Z,8Z,10E,14Z)-eicosatetraenoate. It carries out the reaction (5Z,8Z,11Z,14Z)-eicosatetraenoate + O2 = (15S)-hydroperoxy-(5Z,8Z,11Z,13E)-eicosatetraenoate. The enzyme catalyses (9Z,12Z)-octadecadienoate + O2 = (13S)-hydroperoxy-(9Z,11E)-octadecadienoate. It catalyses the reaction (5Z,8Z,11Z,14Z)-eicosatetraenoate + 2 O2 = (14R,15S)-dihydroperoxy-(5Z,8Z,10E,12E)-eicosatetraenoate. The catalysed reaction is (5Z,8Z,11Z,14Z)-eicosatetraenoate + 2 O2 = (8S,15S)-dihydroperoxy-(5Z,9E,11Z,13E)-eicosatetraenoate. It carries out the reaction (14S,15R)-epoxy-(5Z,8Z,11Z)-eicosatrienoate + O2 = (8S)-hydroperoxy-(14S,15R)-epoxy-(5Z,9E,11Z)-eicosatrienoate. The enzyme catalyses (14S,15R)-epoxy-(5Z,8Z,11Z)-eicosatrienoate + O2 = (12S)-hydroperoxy-(14S,15R)-epoxy-(5Z,8Z,10E)-eicosatrienoate. It catalyses the reaction (14R,15S)-epoxy-(5Z,8Z,11Z)-eicosatrienoate + O2 = (5S)-hydroperoxy-(14R,15S)-epoxy-(6E,8Z,11Z)-eicosatrienoate. The catalysed reaction is (14R,15S)-epoxy-(5Z,8Z,11Z)-eicosatrienoate + O2 = (12S)-hydroperoxy-(14R,15S)-epoxy-(5Z,8Z,10E)-eicosatrienoate. It carries out the reaction (15R)-hydroperoxy-(5Z,8Z,11Z,13E)-eicosatetraenoate = 15-oxo-(5Z,8Z,11Z,13E)-eicosatetraenoate + H2O. The enzyme catalyses (15S)-hydroperoxy-(5Z,8Z,11Z,13E)-eicosatetraenoate = (14S,15S)-epoxy-(5Z,8Z,10E,12E)-eicosatetraenoate + H2O. It catalyses the reaction (12S)-hydroperoxy-(5Z,8Z,10E,14Z)-eicosatetraenoate = (8S)-hydroxy-(11S,12S)-epoxy-(5Z,9E,14Z)-eicosatrienoate. The catalysed reaction is (4Z,7Z,10Z,13Z,16Z)-docosapentaenoate + O2 = 14-hydroperoxy-(4Z,7Z,10Z,12E,16Z)-docosapentaenoate. It carries out the reaction (7Z,10Z,13Z,16Z,19Z)-docosapentaenoate + O2 = 14-hydroperoxy-(7Z,10Z,12E,16Z,19Z)-docosapentaenoate. The enzyme catalyses (4Z,7Z,10Z,13Z,16Z,19Z)-docosahexaenoate + O2 = (14S)-hydroperoxy-(4Z,7Z,10Z,12E,16Z,19Z)-docosahexaenoate. It catalyses the reaction (4Z,7Z,10Z,13Z,16Z,19Z)-docosahexaenoate + O2 = (17S)-hydroperoxy-(4Z,7Z,10Z,13Z,15E,19Z)-docosahexaenoate. The catalysed reaction is (7S)-hydroperoxy-(4Z,8E,10Z,13Z,16Z,19Z)-docosahexaenoate + O2 = (7S,14S)-dihydroperoxy-(4Z,8E,10Z,12E,16Z,19Z)-docosahexaenoate. It carries out the reaction (7S)-hydroperoxy-(4Z,8E,10Z,13Z,16Z,19Z)-docosahexaenoate + O2 = (7S,17S)-dihydroperoxy-(4Z,8E,10Z,13Z,15E,19Z)-docosahexaenoate. The enzyme catalyses (4Z,7Z,10Z,13Z,16Z,19Z)-docosahexaenoate + O2 = (11S)-hydroperoxy-(4Z,7Z,9E,13Z,16Z,19Z)-docosahexaenoate. It catalyses the reaction N-(5Z,8Z,11Z,14Z)-eicosatetraenoyl-taurine + O2 = N-(12S)-hydroperoxy-(5Z,8Z,10E,14Z)-eicosatetraenoyl-taurine. The catalysed reaction is N-(5Z,8Z,11Z,14Z)-eicosatetraenoyl-gamma-aminobutanoate + O2 = N-(12S)-hydroperoxy-(5Z,8Z,10E,14Z)-eicosatetraenoyl-gamma-aminobutanoate. It carries out the reaction N-(5Z,8Z,11Z,14Z)-eicosatetraenoyl-glycine + O2 = N-(12S)-hydroperoxy-(5Z,8Z,10E,14Z)-eicosatetraenoyl-glycine. The enzyme catalyses N-(5Z,8Z,11Z,14Z)-eicosatetraenoyl-L-alanine + O2 = N-(12S)-hydroperoxy-(5Z,8Z,10E,14Z)-eicosatetraenoyl-alanine. It catalyses the reaction N-(5Z,8Z,11Z,14Z)-eicosatetraenoyl-taurine + O2 = N-(15S)-hydroperoxy-(5Z,8Z,11Z,13E)-eicosatetraenoyl-taurine. The catalysed reaction is N-(5Z,8Z,11Z,14Z)-eicosatetraenoyl-gamma-aminobutanoate + O2 = N-(15S)-hydroperoxy-(5Z,8Z,11Z,13E)-eicosatetraenoyl-gamma-aminobutanoate. It carries out the reaction N-(5Z,8Z,11Z,14Z)-eicosatetraenoyl-glycine + O2 = N-(15S)-hydroperoxy-(5Z,8Z,11Z,13E)-eicosatetraenoyl-glycine. The enzyme catalyses N-(5Z,8Z,11Z,14Z)-eicosatetraenoyl-L-alanine + O2 = N-(15S)-hydroperoxy-(5Z,8Z,11Z,13E)-eicosatetraenoyl-alanine. The protein operates within lipid metabolism; hydroperoxy eicosatetraenoic acid biosynthesis. Its function is as follows. Non-heme iron-containing dioxygenase that catalyzes the stereo-specific peroxidation of free and esterified polyunsaturated fatty acids generating a spectrum of bioactive lipid mediators. It inserts peroxyl groups at C12 or C15 of arachidonate ((5Z,8Z,11Z,14Z)-eicosatetraenoate) producing both 12-hydroperoxyeicosatetraenoate/12-HPETE and 15-hydroperoxyeicosatetraenoate/15-HPETE. It may then act on 12-HPETE to produce hepoxilins, which may show pro-inflammatory properties. Can also peroxidize linoleate ((9Z,12Z)-octadecadienoate) to 13-hydroperoxyoctadecadienoate. May participate in the sequential oxidations of DHA ((4Z,7Z,10Z,13Z,16Z,19Z)-docosahexaenoate) to generate specialized pro-resolving mediators (SPMs)like resolvin D5 ((7S,17S)-diHPDHA) and (7S,14S)-diHPDHA, that actively down-regulate the immune response and have anti-aggregation properties with platelets. Can convert epoxy fatty acids to hydroperoxy-epoxides derivatives followed by an intramolecular nucleophilic substitution leading to the formation of monocyclic endoperoxides. Plays an important role during the maintenance of self-tolerance by peroxidizing membrane-bound phosphatidylethanolamine which can then signal the sorting process for clearance of apoptotic cells during inflammation and prevent an autoimmune response. In addition to its role in the immune and inflammatory responses, this enzyme may play a role in epithelial wound healing in the cornea through production of lipoxin A4 (LXA(4)) and docosahexaenoic acid-derived neuroprotectin D1 (NPD1; 10R,17S-HDHA), both lipid autacoids exhibit anti-inflammatory and neuroprotective properties. Furthermore, it may regulate actin polymerization which is crucial for several biological processes such as the phagocytosis of apoptotic cells. It is also implicated in the generation of endogenous ligands for peroxisome proliferator activated receptor (PPAR-gamma), hence modulating macrophage development and function. It may also exert a negative effect on skeletal development by regulating bone mass through this pathway. As well as participates in ER stress and downstream inflammation in adipocytes, pancreatic islets, and liver. Finally, it is also involved in the cellular response to IL13/interleukin-13. This chain is Polyunsaturated fatty acid lipoxygenase ALOX15, found in Bos taurus (Bovine).